We begin with the raw amino-acid sequence, 890 residues long: Alanine--tRNA ligase (890 aa).

4 residues coordinate Zn(2+): His-572, His-576, Cys-674, and His-678.

This sequence belongs to the class-II aminoacyl-tRNA synthetase family. Zn(2+) is required as a cofactor.

It is found in the cytoplasm. It carries out the reaction tRNA(Ala) + L-alanine + ATP = L-alanyl-tRNA(Ala) + AMP + diphosphate. In terms of biological role, catalyzes the attachment of alanine to tRNA(Ala) in a two-step reaction: alanine is first activated by ATP to form Ala-AMP and then transferred to the acceptor end of tRNA(Ala). Also edits incorrectly charged Ser-tRNA(Ala) and Gly-tRNA(Ala) via its editing domain. The chain is Alanine--tRNA ligase from Prochlorococcus marinus (strain MIT 9211).